Here is a 657-residue protein sequence, read N- to C-terminus: KNR4/SMI1 homolog (657 aa).

Disordered regions lie at residues 168–193 (EQQQRAKSSSELPQTVTPQAVKQKGY), 366–402 (SSSVVNRPTPADAAGQARKTQGYSPMVPGASSNESVS), and 416–657 (LTQT…TVAL). The span at 174-187 (KSSSELPQTVTPQA) shows a compositional bias: polar residues. Positions 416 to 436 (LTQTDASSKGTTKPATPNPMT) are enriched in polar residues. Low complexity-rich tracts occupy residues 444 to 455 (STPGSPSAAAEA) and 473 to 482 (TPTVTKESTP). Residues 492–504 (LDSKNTETNEDTR) are compositionally biased toward basic and acidic residues. Residues 505–521 (ATNTAHSMAPTVSSAIT) are compositionally biased toward polar residues. Composition is skewed to basic and acidic residues over residues 535–561 (KPKDTEKTDDAKDVHEANKQDLTKANE), 569–604 (VEPKDNEVSADSKVKARAESKSDHDSKTNNIPEKKV), and 627–650 (KSDKKAKPAEDPKEHDLKIEKLNE).

It belongs to the KNR4/SMI1 family.

The polypeptide is KNR4/SMI1 homolog (Eremothecium gossypii (strain ATCC 10895 / CBS 109.51 / FGSC 9923 / NRRL Y-1056) (Yeast)).